Consider the following 422-residue polypeptide: Cysteate synthase (422 aa).

Lys105 carries the post-translational modification N6-(pyridoxal phosphate)lysine. Residues Asn131 and Thr379 each coordinate pyridoxal 5'-phosphate.

The protein belongs to the threonine synthase family. Cysteate synthase subfamily. In terms of assembly, homotrimer. The cofactor is pyridoxal 5'-phosphate.

It carries out the reaction O-phospho-L-serine + sulfite + H(+) = L-cysteate + phosphate. It participates in cofactor biosynthesis; coenzyme M biosynthesis. Its function is as follows. Specifically catalyzes the beta-elimination of phosphate from L-phosphoserine and the beta-addition of sulfite to the dehydroalanine intermediate to produce L-cysteate. The protein is Cysteate synthase of Methanospirillum hungatei JF-1 (strain ATCC 27890 / DSM 864 / NBRC 100397 / JF-1).